The chain runs to 203 residues: uncharacterized protein (203 aa).

Residues 180-200 (VYLLLFGIPLLILIFLIIFFI) traverse the membrane as a helical segment.

It localises to the virion. The protein localises to the host membrane. This is an uncharacterized protein from Acanthamoeba polyphaga (Amoeba).